The following is an 85-amino-acid chain: Small ribosomal subunit protein uS17 (85 aa).

The protein belongs to the universal ribosomal protein uS17 family. As to quaternary structure, part of the 30S ribosomal subunit.

Its function is as follows. One of the primary rRNA binding proteins, it binds specifically to the 5'-end of 16S ribosomal RNA. This is Small ribosomal subunit protein uS17 from Mycoplasma capricolum subsp. capricolum (strain California kid / ATCC 27343 / NCTC 10154).